The primary structure comprises 293 residues: MLKGSITALVTPFDREGAFDEKAFRAFVNWQIEEGTKGLVPVGTTGETPTLSHDEHKRVIEVCIEVAAGRVPVIAGAGSNNTVEAIELAQHAEKAGADAVLVVTPYYNKPNQRGLYEHFSRVARSISIPLVIYNIPGRSIIDMTPETMGALVRDCKNIVGVKDATGKIERVSEQRAICGKEFIQLSGEDATALGFNAHGGVGCISVTSNIAPRLCAEFQEACQAGNFAKALELQDRLMPLHKALFLEPNPSGPKYALSRLGRIENVLRSPMVTIEAATAEKIDHAMKHAVLIN.

Residue threonine 45 participates in pyruvate binding. The active-site Proton donor/acceptor is tyrosine 133. Residue lysine 162 is the Schiff-base intermediate with substrate of the active site. Isoleucine 204 provides a ligand contact to pyruvate.

This sequence belongs to the DapA family. In terms of assembly, homotetramer; dimer of dimers.

It is found in the cytoplasm. The enzyme catalyses L-aspartate 4-semialdehyde + pyruvate = (2S,4S)-4-hydroxy-2,3,4,5-tetrahydrodipicolinate + H2O + H(+). It participates in amino-acid biosynthesis; L-lysine biosynthesis via DAP pathway; (S)-tetrahydrodipicolinate from L-aspartate: step 3/4. Its function is as follows. Catalyzes the condensation of (S)-aspartate-beta-semialdehyde [(S)-ASA] and pyruvate to 4-hydroxy-tetrahydrodipicolinate (HTPA). This is 4-hydroxy-tetrahydrodipicolinate synthase from Brucella abortus biovar 1 (strain 9-941).